The primary structure comprises 121 residues: Large ribosomal subunit protein bL12 (121 aa).

It belongs to the bacterial ribosomal protein bL12 family. As to quaternary structure, homodimer. Part of the ribosomal stalk of the 50S ribosomal subunit. Forms a multimeric L10(L12)X complex, where L10 forms an elongated spine to which 2 to 4 L12 dimers bind in a sequential fashion. Binds GTP-bound translation factors.

In terms of biological role, forms part of the ribosomal stalk which helps the ribosome interact with GTP-bound translation factors. Is thus essential for accurate translation. This chain is Large ribosomal subunit protein bL12, found in Proteus mirabilis (strain HI4320).